Here is a 374-residue protein sequence, read N- to C-terminus: Flap endonuclease 1 (374 aa).

Positions 1–105 (MGIKGLTALI…ELLQKRFGRR (105 aa)) are N-domain. Residue aspartate 34 coordinates Mg(2+). Residues arginine 47 and arginine 71 each coordinate DNA. Aspartate 87 contributes to the Mg(2+) binding site. Residues 103–122 (GRREEAREQEEEQKDVADAE) form a disordered region. The interval 123–254 (KMDQLARRQV…KTALKLIREH (132 aa)) is I-domain. Mg(2+) is bound by residues glutamate 159, glutamate 161, aspartate 180, and aspartate 182. Position 159 (glutamate 159) interacts with DNA. Residues glycine 232 and aspartate 234 each coordinate DNA. Residue aspartate 234 participates in Mg(2+) binding. A disordered region spans residues 335–374 (SLSQKQQGRLDGFFTVKPGSAPPKRKAEDDKKNVKKKGKK). Residues 340–348 (QQGRLDGFF) form an interaction with PCNA region.

It belongs to the XPG/RAD2 endonuclease family. FEN1 subfamily. Interacts with PCNA. Three molecules of FEN1 bind to one PCNA trimer with each molecule binding to one PCNA monomer. PCNA stimulates the nuclease activity without altering cleavage specificity. Requires Mg(2+) as cofactor. In terms of processing, phosphorylated. Phosphorylation upon DNA damage induces relocalization to the nuclear plasma.

The protein resides in the nucleus. Its subcellular location is the nucleolus. The protein localises to the nucleoplasm. It is found in the mitochondrion. Functionally, structure-specific nuclease with 5'-flap endonuclease and 5'-3' exonuclease activities involved in DNA replication and repair. During DNA replication, cleaves the 5'-overhanging flap structure that is generated by displacement synthesis when DNA polymerase encounters the 5'-end of a downstream Okazaki fragment. It enters the flap from the 5'-end and then tracks to cleave the flap base, leaving a nick for ligation. Also involved in the long patch base excision repair (LP-BER) pathway, by cleaving within the apurinic/apyrimidinic (AP) site-terminated flap. Acts as a genome stabilization factor that prevents flaps from equilibrating into structures that lead to duplications and deletions. Also possesses 5'-3' exonuclease activity on nicked or gapped double-stranded DNA, and exhibits RNase H activity. Also involved in replication and repair of rDNA and in repairing mitochondrial DNA. The chain is Flap endonuclease 1 from Mycosarcoma maydis (Corn smut fungus).